A 179-amino-acid chain; its full sequence is MFGYVVVNEQNSIVFLDGNEEFKTIFQSLIQSEITSRKSDLDSASSGVGSSTCTEEQESSLDHFKKPNVVFNSSEISHILLPLILLYRSTSEKTKDPITEMSSQFGTISISKFYHNYLVLVFANDDRKRIEVSQTIEHTIATLFGPLIAFCHTDLTTVKKPKEHLACALTRKLSYSPKC.

A disordered region spans residues D40–S59. Residues D42–T54 show a composition bias toward polar residues.

The chain is Gut granule loss protein 3 (glo-3) from Caenorhabditis elegans.